We begin with the raw amino-acid sequence, 429 residues long: Saccharopine dehydrogenase-like oxidoreductase (429 aa).

A2 is subject to N-acetylalanine. Phosphoserine is present on residues S209, S215, and S217.

Belongs to the saccharopine dehydrogenase family.

The chain is Saccharopine dehydrogenase-like oxidoreductase (Sccpdh) from Mus musculus (Mouse).